The primary structure comprises 100 residues: Large ribosomal subunit protein mL53 (100 aa).

This sequence belongs to the mitochondrion-specific ribosomal protein mL53 family. As to quaternary structure, component of the mitochondrial large ribosomal subunit (mt-LSU). Mature yeast 74S mitochondrial ribosomes consist of a small (37S) and a large (54S) subunit. The 37S small subunit contains a 15S ribosomal RNA (15S mt-rRNA) and at least 32 different proteins. The 54S large subunit contains a 21S rRNA (21S mt-rRNA) and at least 45 different proteins.

It is found in the mitochondrion. Functionally, component of the mitochondrial ribosome (mitoribosome), a dedicated translation machinery responsible for the synthesis of mitochondrial genome-encoded proteins, including at least some of the essential transmembrane subunits of the mitochondrial respiratory chain. The mitoribosomes are attached to the mitochondrial inner membrane and translation products are cotranslationally integrated into the membrane. This Schizosaccharomyces pombe (strain 972 / ATCC 24843) (Fission yeast) protein is Large ribosomal subunit protein mL53 (mrpl44).